A 205-amino-acid polypeptide reads, in one-letter code: Probable thymidylate kinase (205 aa).

9-16 contributes to the ATP binding site; that stretch reads GIDGVGKS.

This sequence belongs to the thymidylate kinase family.

It catalyses the reaction dTMP + ATP = dTDP + ADP. This chain is Probable thymidylate kinase, found in Caldivirga maquilingensis (strain ATCC 700844 / DSM 13496 / JCM 10307 / IC-167).